The following is a 138-amino-acid chain: Protein FAM136A (138 aa).

This sequence belongs to the FAM136 family.

This Xenopus laevis (African clawed frog) protein is Protein FAM136A (fam136a).